The following is an 82-amino-acid chain: RNA-binding protein Hfq (82 aa).

The 61-residue stretch at 9–69 (DQLLNTARKD…ISTIIPAKII (61 aa)) folds into the Sm domain.

It belongs to the Hfq family. As to quaternary structure, homohexamer.

Functionally, RNA chaperone that binds small regulatory RNA (sRNAs) and mRNAs to facilitate mRNA translational regulation in response to envelope stress, environmental stress and changes in metabolite concentrations. Also binds with high specificity to tRNAs. The protein is RNA-binding protein Hfq of Leptospira borgpetersenii serovar Hardjo-bovis (strain L550).